The primary structure comprises 301 residues: Acetyl-coenzyme A carboxylase carboxyl transferase subunit beta (301 aa).

In terms of domain architecture, CoA carboxyltransferase N-terminal spans 25–294 (LWIKCPETGE…SAANDMNSGA (270 aa)).

Belongs to the AccD/PCCB family. In terms of assembly, acetyl-CoA carboxylase is a heterohexamer composed of biotin carboxyl carrier protein (AccB), biotin carboxylase (AccC) and two subunits each of ACCase subunit alpha (AccA) and ACCase subunit beta (AccD).

Its subcellular location is the cytoplasm. It catalyses the reaction N(6)-carboxybiotinyl-L-lysyl-[protein] + acetyl-CoA = N(6)-biotinyl-L-lysyl-[protein] + malonyl-CoA. The protein operates within lipid metabolism; malonyl-CoA biosynthesis; malonyl-CoA from acetyl-CoA: step 1/1. Functionally, component of the acetyl coenzyme A carboxylase (ACC) complex. Biotin carboxylase (BC) catalyzes the carboxylation of biotin on its carrier protein (BCCP) and then the CO(2) group is transferred by the transcarboxylase to acetyl-CoA to form malonyl-CoA. The protein is Acetyl-coenzyme A carboxylase carboxyl transferase subunit beta of Rhizobium leguminosarum bv. trifolii (strain WSM1325).